Here is a 341-residue protein sequence, read N- to C-terminus: tRNA N6-adenosine threonylcarbamoyltransferase (341 aa).

Fe cation is bound by residues H112 and H116. Substrate contacts are provided by residues 134–138 (LASGG), D167, G180, and N279. D307 contacts Fe cation.

This sequence belongs to the KAE1 / TsaD family. Fe(2+) serves as cofactor.

Its subcellular location is the cytoplasm. It catalyses the reaction L-threonylcarbamoyladenylate + adenosine(37) in tRNA = N(6)-L-threonylcarbamoyladenosine(37) in tRNA + AMP + H(+). Its function is as follows. Required for the formation of a threonylcarbamoyl group on adenosine at position 37 (t(6)A37) in tRNAs that read codons beginning with adenine. Is involved in the transfer of the threonylcarbamoyl moiety of threonylcarbamoyl-AMP (TC-AMP) to the N6 group of A37, together with TsaE and TsaB. TsaD likely plays a direct catalytic role in this reaction. This chain is tRNA N6-adenosine threonylcarbamoyltransferase, found in Rickettsia bellii (strain OSU 85-389).